Here is a 442-residue protein sequence, read N- to C-terminus: Serine protease AprX (442 aa).

Positions 122 to 439 constitute a Peptidase S8 domain; sequence KALLDTATEA…AGAVNAENSV (318 aa). Active-site charge relay system residues include Asp155 and His187. The tract at residues 318–337 is disordered; the sequence is DNNTASSDDDTVASFSSRGP. Ser384 acts as the Charge relay system in catalysis. The segment at 423–442 is disordered; that stretch reads EDPNIYGAGAVNAENSVPGQ.

Belongs to the peptidase S8 family.

It localises to the cytoplasm. With respect to regulation, is completely inhibited by phenylmethanesulphonylfluoride (PMSF) in vitro. In terms of biological role, displays serine protease activity. Seems to have a broad substrate specificity. This chain is Serine protease AprX (aprX), found in Bacillus subtilis (strain 168).